We begin with the raw amino-acid sequence, 229 residues long: UPF0758 protein Mbur_0382 (229 aa).

The region spanning 106–228 (KIRSANDVYS…YVSLKEEGYI (123 aa)) is the MPN domain. The Zn(2+) site is built by His177, His179, and Asp190. The short motif at 177-190 (HNHPSGDPAPSRED) is the JAMM motif element.

This sequence belongs to the UPF0758 family.

The polypeptide is UPF0758 protein Mbur_0382 (Methanococcoides burtonii (strain DSM 6242 / NBRC 107633 / OCM 468 / ACE-M)).